The sequence spans 358 residues: Glutamate--cysteine ligase (358 aa).

Belongs to the glutamate--cysteine ligase type 2 family. YbdK subfamily.

It carries out the reaction L-cysteine + L-glutamate + ATP = gamma-L-glutamyl-L-cysteine + ADP + phosphate + H(+). Catalyzes the synthesis of gamma-glutamylcysteine (gamma-GC), the main low-molecular-weight thiol compound instead of glutathione in halophilic archaea. The protein is Glutamate--cysteine ligase of Haloferax volcanii (strain ATCC 29605 / DSM 3757 / JCM 8879 / NBRC 14742 / NCIMB 2012 / VKM B-1768 / DS2) (Halobacterium volcanii).